Consider the following 293-residue polypeptide: Ribosomal RNA small subunit methyltransferase A (293 aa).

The S-adenosyl-L-methionine site is built by asparagine 33, valine 35, glycine 60, glutamate 81, aspartate 111, and asparagine 130.

The protein belongs to the class I-like SAM-binding methyltransferase superfamily. rRNA adenine N(6)-methyltransferase family. RsmA subfamily.

Its subcellular location is the cytoplasm. The catalysed reaction is adenosine(1518)/adenosine(1519) in 16S rRNA + 4 S-adenosyl-L-methionine = N(6)-dimethyladenosine(1518)/N(6)-dimethyladenosine(1519) in 16S rRNA + 4 S-adenosyl-L-homocysteine + 4 H(+). In terms of biological role, specifically dimethylates two adjacent adenosines (A1518 and A1519) in the loop of a conserved hairpin near the 3'-end of 16S rRNA in the 30S particle. May play a critical role in biogenesis of 30S subunits. This is Ribosomal RNA small subunit methyltransferase A from Corynebacterium glutamicum (strain R).